The primary structure comprises 88 residues: Kunitz-type U15-theraphotoxin-Hs1g (88 aa).

Residues methionine 1–alanine 27 form the signal peptide. A propeptide spanning residues glutamate 28–arginine 33 is cleaved from the precursor. The BPTI/Kunitz inhibitor domain maps to cysteine 37–cysteine 85. Intrachain disulfides connect cysteine 37/cysteine 85, cysteine 46/cysteine 68, and cysteine 60/cysteine 81.

It belongs to the venom Kunitz-type family. 03 (sub-Kunitz) subfamily. In terms of tissue distribution, expressed by the venom gland.

It is found in the secreted. Functionally, serine protease inhibitor that inhibits trypsin at a molar ratio of 1:1. The protein is Kunitz-type U15-theraphotoxin-Hs1g of Cyriopagopus schmidti (Chinese bird spider).